The chain runs to 95 residues: Heteroscorpine-1 (95 aa).

Positions 1–19 are cleaved as a signal peptide; it reads MNSKLTALIFLGLVAIASC. A BetaSPN-type CS-alpha/beta domain is found at 55–95; sequence EFQCVANIDTMGNCETHCQKTSGEKGFCHGTKCKCGKPLSY. Intrachain disulfides connect Cys-58-Cys-82, Cys-68-Cys-87, and Cys-72-Cys-89.

The protein belongs to the long chain scorpion toxin family. Class 3 subfamily. In terms of processing, contains 3 disulfide bonds. As to expression, expressed by the venom gland.

It is found in the secreted. Its function is as follows. Has antibacterial activity against B.subtilis, K.pneumoniae and P.aeruginosa. The chain is Heteroscorpine-1 from Heterometrus laoticus (Thai giant scorpion).